We begin with the raw amino-acid sequence, 125 residues long: N-alpha-acetyltransferase 38, NatC auxiliary subunit (125 aa).

Positions 1–42 (MAGAGPTMLLREENGCCSRRQSSSSAGDSDGEQEDSPATRAR) are disordered. Ala-2 is subject to N-acetylalanine. Residues 18 to 28 (SRRQSSSSAGD) are compositionally biased toward low complexity. Ser-22, Ser-25, and Ser-29 each carry phosphoserine. A Sm domain is found at 40 to 118 (RARQQLEALL…IVSIEVQRES (79 aa)).

Belongs to the snRNP Sm proteins family. In terms of assembly, component of the N-terminal acetyltransferase C (NatC) complex, which is composed of NAA35, NAA38 and NAA30.

It is found in the cytoplasm. The protein resides in the nucleus. Its function is as follows. Auxillary component of the N-terminal acetyltransferase C (NatC) complex which catalyzes acetylation of N-terminal methionine residues. N-terminal acetylation protects proteins from ubiquitination and degradation by the N-end rule pathway. This is N-alpha-acetyltransferase 38, NatC auxiliary subunit (Naa38) from Mus musculus (Mouse).